Here is a 164-residue protein sequence, read N- to C-terminus: UPF0251 protein MA_0157 (164 aa).

The segment at 91-124 (GDYRMPRGDGTGPAGQGPVGGGRSRGQGKGRGGR) is disordered. Residues 99–115 (DGTGPAGQGPVGGGRSR) are compositionally biased toward gly residues.

Belongs to the UPF0251 family.

The protein is UPF0251 protein MA_0157 of Methanosarcina acetivorans (strain ATCC 35395 / DSM 2834 / JCM 12185 / C2A).